Consider the following 227-residue polypeptide: Probable septum site-determining protein MinC (227 aa).

This sequence belongs to the MinC family. As to quaternary structure, interacts with MinD and FtsZ.

In terms of biological role, cell division inhibitor that blocks the formation of polar Z ring septums. Rapidly oscillates between the poles of the cell to destabilize FtsZ filaments that have formed before they mature into polar Z rings. Prevents FtsZ polymerization. The chain is Probable septum site-determining protein MinC from Laribacter hongkongensis (strain HLHK9).